The primary structure comprises 129 residues: Endocuticle structural glycoprotein SgAbd-9 (129 aa).

Q1 is modified (pyrrolidone carboxylic acid). The region spanning 28–98 (DGSYTFSYES…VGNVVAPAIS (71 aa)) is the Chitin-binding type R&amp;R domain. The O-linked (HexNAc...) threonine glycan is linked to T120.

In terms of biological role, component of the abdominal endocuticle. The chain is Endocuticle structural glycoprotein SgAbd-9 from Schistocerca gregaria (Desert locust).